A 216-amino-acid polypeptide reads, in one-letter code: MSQGQSKKLDVTVEQLRSIYHQFHDILEEKTDLHLPKKEYDDDAVRREVQIQLQEFLLSAMTMASKSLEVVNADTVGKTVKQLIMESQEKYMEPFDLDLNEQVRKMYQEWEDETVKVAQLRQTGPAKINEVYNNSKDEYLAQLDGRIGVLQARMMQQQSADHDDSTDDADDHINWEHIKQDYVASLNELYQTQQDLPKVRYNVEKVKRLMDFLEED.

N-acetylserine is present on serine 2.

In terms of assembly, component of the MIND kinetochore complex, which is composed of at least MTW1, NNF1, NSL1 and DSN1. Interacts with DSN1.

Its subcellular location is the nucleus. It is found in the chromosome. The protein resides in the centromere. The protein localises to the kinetochore. Functionally, acts as an essential component of the kinetochore MIND complex, which is required for the spindle checkpoint and kinetochore integrity. MIND plays a role in establishing a bipolar spindle-kinetochore interaction by joining kinetochore subunits contacting DNA to those contacting microtubules. NSL1 facilitates the attachment of two of the DASH complex components, DAD2 and SPC19, to the kinetochore in a microtubule-dependent manner. This Saccharomyces cerevisiae (strain ATCC 204508 / S288c) (Baker's yeast) protein is Kinetochore-associated protein NSL1 (NSL1).